Here is a 239-residue protein sequence, read N- to C-terminus: Ribonuclease 3 (239 aa).

An RNase III domain is found at 12–137 (REKVEAVIGY…LIAAIYLDAG (126 aa)). Glutamate 50 serves as a coordination point for Mg(2+). Aspartate 54 is a catalytic residue. Mg(2+)-binding residues include aspartate 123 and glutamate 126. Glutamate 126 is an active-site residue. One can recognise a DRBM domain in the interval 162–231 (DAKTELQEWA…ATRLLEREGV (70 aa)).

Belongs to the ribonuclease III family. As to quaternary structure, homodimer. Requires Mg(2+) as cofactor.

The protein localises to the cytoplasm. The catalysed reaction is Endonucleolytic cleavage to 5'-phosphomonoester.. Its function is as follows. Digests double-stranded RNA. Involved in the processing of primary rRNA transcript to yield the immediate precursors to the large and small rRNAs (23S and 16S). Processes some mRNAs, and tRNAs when they are encoded in the rRNA operon. Processes pre-crRNA and tracrRNA of type II CRISPR loci if present in the organism. In Allorhizobium ampelinum (strain ATCC BAA-846 / DSM 112012 / S4) (Agrobacterium vitis (strain S4)), this protein is Ribonuclease 3.